We begin with the raw amino-acid sequence, 150 residues long: UPF0756 membrane protein YPN_1328 (150 aa).

The next 4 membrane-spanning stretches (helical) occupy residues 16 to 36 (ALGI…LIAI), 51 to 71 (YGLT…IASG), 88 to 108 (ILAI…VSLM), and 114 to 134 (VVAG…GVPV).

The protein belongs to the UPF0756 family.

It is found in the cell membrane. The chain is UPF0756 membrane protein YPN_1328 from Yersinia pestis bv. Antiqua (strain Nepal516).